The following is a 223-amino-acid chain: Urease accessory protein UreF (223 aa).

This sequence belongs to the UreF family. As to quaternary structure, ureD, UreF and UreG form a complex that acts as a GTP-hydrolysis-dependent molecular chaperone, activating the urease apoprotein by helping to assemble the nickel containing metallocenter of UreC. The UreE protein probably delivers the nickel.

It is found in the cytoplasm. Functionally, required for maturation of urease via the functional incorporation of the urease nickel metallocenter. This chain is Urease accessory protein UreF, found in Rhizobium etli (strain ATCC 51251 / DSM 11541 / JCM 21823 / NBRC 15573 / CFN 42).